The sequence spans 460 residues: ATP synthase subunit beta (460 aa).

150–157 (GGAGVGKT) contributes to the ATP binding site.

It belongs to the ATPase alpha/beta chains family. As to quaternary structure, F-type ATPases have 2 components, CF(1) - the catalytic core - and CF(0) - the membrane proton channel. CF(1) has five subunits: alpha(3), beta(3), gamma(1), delta(1), epsilon(1). CF(0) has three main subunits: a(1), b(2) and c(9-12). The alpha and beta chains form an alternating ring which encloses part of the gamma chain. CF(1) is attached to CF(0) by a central stalk formed by the gamma and epsilon chains, while a peripheral stalk is formed by the delta and b chains.

Its subcellular location is the cell inner membrane. It carries out the reaction ATP + H2O + 4 H(+)(in) = ADP + phosphate + 5 H(+)(out). Produces ATP from ADP in the presence of a proton gradient across the membrane. The catalytic sites are hosted primarily by the beta subunits. This chain is ATP synthase subunit beta, found in Klebsiella pneumoniae subsp. pneumoniae (strain ATCC 700721 / MGH 78578).